Here is a 21-residue protein sequence, read N- to C-terminus: Antimicrobial peptide scolopin-1 (21 aa).

In terms of tissue distribution, expressed by the venom gland.

The protein resides in the secreted. In terms of biological role, antimicrobial peptide against both Gram-positive, -negative and yeast. Also induces histamine release by mast cells and shows moderate hemolytic activities against both human and rabbit red cells. The sequence is that of Antimicrobial peptide scolopin-1 from Scolopendra mutilans (Chinese red-headed centipede).